A 57-amino-acid polypeptide reads, in one-letter code: UPF0057 membrane protein T23F2.4 (57 aa).

Transmembrane regions (helical) follow at residues 3 to 23 (ITCM…VGVF) and 36 to 56 (ILLT…IILA).

It belongs to the UPF0057 (PMP3) family.

It localises to the membrane. This chain is UPF0057 membrane protein T23F2.4, found in Caenorhabditis elegans.